A 308-amino-acid chain; its full sequence is Quinolinate synthase (308 aa).

Residues H21 and S38 each coordinate iminosuccinate. C83 contributes to the [4Fe-4S] cluster binding site. Residues 109–111 (YIN) and S126 each bind iminosuccinate. A [4Fe-4S] cluster-binding site is contributed by C170. Iminosuccinate-binding positions include 196–198 (HPE) and T213. Residue C263 participates in [4Fe-4S] cluster binding.

This sequence belongs to the quinolinate synthase family. Type 2 subfamily. [4Fe-4S] cluster serves as cofactor.

The protein resides in the cytoplasm. It catalyses the reaction iminosuccinate + dihydroxyacetone phosphate = quinolinate + phosphate + 2 H2O + H(+). The protein operates within cofactor biosynthesis; NAD(+) biosynthesis; quinolinate from iminoaspartate: step 1/1. Its function is as follows. Catalyzes the condensation of iminoaspartate with dihydroxyacetone phosphate to form quinolinate. The sequence is that of Quinolinate synthase from Sulfurisphaera tokodaii (strain DSM 16993 / JCM 10545 / NBRC 100140 / 7) (Sulfolobus tokodaii).